Reading from the N-terminus, the 129-residue chain is NADH-quinone oxidoreductase subunit A (129 aa).

A run of 3 helical transmembrane segments spans residues 14 to 34 (LAIHVALSAGIVAAIIGVAAV), 67 to 87 (FLIAALFVIFDMEAAILFAWA), and 97 to 117 (GLIEAAIFIGVLLLALVYLWI).

The protein belongs to the complex I subunit 3 family. As to quaternary structure, NDH-1 is composed of 14 different subunits. Subunits NuoA, H, J, K, L, M, N constitute the membrane sector of the complex.

It localises to the cell inner membrane. The enzyme catalyses a quinone + NADH + 5 H(+)(in) = a quinol + NAD(+) + 4 H(+)(out). Functionally, NDH-1 shuttles electrons from NADH, via FMN and iron-sulfur (Fe-S) centers, to quinones in the respiratory chain. The immediate electron acceptor for the enzyme in this species is believed to be ubiquinone. Couples the redox reaction to proton translocation (for every two electrons transferred, four hydrogen ions are translocated across the cytoplasmic membrane), and thus conserves the redox energy in a proton gradient. The protein is NADH-quinone oxidoreductase subunit A of Rhodopseudomonas palustris (strain BisB18).